Reading from the N-terminus, the 171-residue chain is Ribosome-binding factor A (171 aa).

Residues 120 to 132 (AALAAAAQPAGDP) are compositionally biased toward low complexity. Residues 120–171 (AALAAAAQPAGDPDPYKKPVDHTDDWDEDDEDDRDGDDAVDALDAAADVPRL) form a disordered region. The span at 133-142 (DPYKKPVDHT) shows a compositional bias: basic and acidic residues. The segment covering 143 to 160 (DDWDEDDEDDRDGDDAVD) has biased composition (acidic residues). Residues 161 to 171 (ALDAAADVPRL) are compositionally biased toward low complexity.

It belongs to the RbfA family. As to quaternary structure, monomer. Binds 30S ribosomal subunits, but not 50S ribosomal subunits or 70S ribosomes.

Its subcellular location is the cytoplasm. Functionally, one of several proteins that assist in the late maturation steps of the functional core of the 30S ribosomal subunit. Associates with free 30S ribosomal subunits (but not with 30S subunits that are part of 70S ribosomes or polysomes). Required for efficient processing of 16S rRNA. May interact with the 5'-terminal helix region of 16S rRNA. This Kineococcus radiotolerans (strain ATCC BAA-149 / DSM 14245 / SRS30216) protein is Ribosome-binding factor A.